A 198-amino-acid polypeptide reads, in one-letter code: Virion infectivity factor (198 aa).

The RNA-binding stretch occupies residues 76-115 (GERPWHLGHGIGLEWRQGKYSTQIDPETADQLIHTRYFTC). At T97 the chain carries Phosphothreonine; by host MAP4K1. The short motif at 109–140 (HTRYFTCFAAGAVRQAILGERILTFCHFQSGH) is the HCCH motif element. Position 145 is a phosphothreonine; by host (T145). The BC-box-like motif signature appears at 145-154 (TLQFLAFRKV). The interval 152–170 (RKVVESQDKQPKGPRRPLP) is multimerization. Residues 159–198 (DKQPKGPRRPLPSVTKLTEDRWNKHRTTTGRRENHTLSGC) are disordered. A Phosphoserine; by host MAP4K1 modification is found at S171. The segment at 177-178 (ED) is membrane association. Positions 188–198 (GRRENHTLSGC) are enriched in basic and acidic residues.

This sequence belongs to the primate lentivirus group Vif protein family. In terms of assembly, homomultimer; in vitro and presumably in vivo. Interacts with viral Pr55Gag precursor, host APOBEC3G, UBCE7IP1 isoform 3/ZIN, ABCE1 and possibly with SAT. Forms an E3 ligase complex by interacting with host CUL5 and elongin BC complex (ELOB and ELOC). In terms of processing, highly phosphorylated on serine and threonine residues. Thr-97 and Ser-171 are phosphorylated by the mitogen activated kinase MAP4K1. Post-translationally, polyubiquitinated and degraded by the proteasome in the presence of APOBEC3G.

Its subcellular location is the host cytoplasm. The protein localises to the host cell membrane. It localises to the virion. In terms of biological role, counteracts the innate antiviral activity of APOBEC3G. Forms a complex with host APOBEC3G thus preventing the entry of this lethally hypermutating enzyme into progeny virions. Functions as an adapter molecule, recruiting APOBEC3G to the ubiquitin-proteasome machinery. Targets APOBEC3G for degradation through the assembly with elongin BC complex, CUL5 and RBX1. Binds viral RNA and affects the stability of viral nucleoprotein core. May play a role in viral morphology. Interacts with host ABCE1, which seems to be involved in lentiviruses capsid formation and displays RNase L inhibitor activity. This interaction may play a role in protecting viral RNA from damage during viral assembly. May interact with host SAT, which is a regulator of polyamine cell level. This interaction may be relevant since polyamines affect viral RNA properties. In Pan troglodytes (Chimpanzee), this protein is Virion infectivity factor.